We begin with the raw amino-acid sequence, 446 residues long: Nuclear envelope integral membrane protein 1 (446 aa).

A signal peptide spans 1–37 (MAGFMKYKSVSTTIETVRLKLILTAVLFLFPFSQTSG). Asn-62, Asn-118, and Asn-129 each carry an N-linked (GlcNAc...) asparagine glycan. The next 5 membrane-spanning stretches (helical) occupy residues 154 to 174 (IYLF…DVLS), 181 to 201 (YSAG…FIVY), 209 to 229 (PFYM…QLVF), 239 to 259 (HWHL…AVCY), and 269 to 289 (SINI…YAGI). Residues 410 to 431 (LFSTDEEDKEEEEDGWETEDDI) show a composition bias toward acidic residues. The segment at 410-446 (LFSTDEEDKEEEEDGWETEDDIKPEVTSPRMNNTRGK) is disordered. A glycan (N-linked (GlcNAc...) asparagine) is linked at Asn-441.

The protein belongs to the NEMP family.

The protein localises to the nucleus inner membrane. Functionally, contributes to nuclear envelope stiffness in germ cells. Involved in male and female fertility. Essential for normal erythropoiesis. Required for efficient nuclear envelope opening and enucleation during the late stages of erythroblast maturation. In Danio rerio (Zebrafish), this protein is Nuclear envelope integral membrane protein 1.